We begin with the raw amino-acid sequence, 262 residues long: uncharacterized protein (262 aa).

In terms of domain architecture, ABC transporter spans 5 to 223; the sequence is IKVENLTKYF…MAYIEYLDNG (219 aa). 37 to 44 contributes to the ATP binding site; that stretch reads GHNGAGKT.

Belongs to the ABC transporter superfamily.

This is an uncharacterized protein from Methanocaldococcus jannaschii (strain ATCC 43067 / DSM 2661 / JAL-1 / JCM 10045 / NBRC 100440) (Methanococcus jannaschii).